The primary structure comprises 123 residues: Putative iron-sulfur cluster insertion protein ErpA (123 aa).

Iron-sulfur cluster is bound by residues Cys51, Cys115, and Cys117.

Belongs to the HesB/IscA family. Homodimer. Iron-sulfur cluster is required as a cofactor.

Functionally, required for insertion of 4Fe-4S clusters. This chain is Putative iron-sulfur cluster insertion protein ErpA, found in Burkholderia ambifaria (strain ATCC BAA-244 / DSM 16087 / CCUG 44356 / LMG 19182 / AMMD) (Burkholderia cepacia (strain AMMD)).